The following is an 875-amino-acid chain: Alanine--tRNA ligase (875 aa).

The Zn(2+) site is built by His-596, His-600, Cys-700, and His-704.

This sequence belongs to the class-II aminoacyl-tRNA synthetase family. Zn(2+) is required as a cofactor.

It is found in the cytoplasm. It carries out the reaction tRNA(Ala) + L-alanine + ATP = L-alanyl-tRNA(Ala) + AMP + diphosphate. In terms of biological role, catalyzes the attachment of alanine to tRNA(Ala) in a two-step reaction: alanine is first activated by ATP to form Ala-AMP and then transferred to the acceptor end of tRNA(Ala). Also edits incorrectly charged Ser-tRNA(Ala) and Gly-tRNA(Ala) via its editing domain. In Methanocella arvoryzae (strain DSM 22066 / NBRC 105507 / MRE50), this protein is Alanine--tRNA ligase.